Here is a 284-residue protein sequence, read N- to C-terminus: Tropomyosin (284 aa).

A coiled-coil region spans residues 1 to 284; that stretch reads MDGIKKKMIA…DQTFAELTGY (284 aa). Composition is skewed to basic and acidic residues over residues 29-42 and 111-136; these read LKQK…KETE and AKFD…RSIA. Disordered regions lie at residues 29-49 and 111-149; these read LKQK…LNNR and AKFD…DQQK.

This sequence belongs to the tropomyosin family.

Functionally, tropomyosin, in association with the troponin complex, plays a central role in the calcium dependent regulation of muscle contraction. This Clonorchis sinensis (Chinese liver fluke) protein is Tropomyosin.